A 267-amino-acid polypeptide reads, in one-letter code: MRFLCLHGYAFSVEVLQQQMEPITAHLPSDWEYEFLEAGMEPTELMLPNLKQVPKPNYSWYNFPYPEDVEEAYERLAAYVESEGPFDGIWGFSQGGSMAALLLLMHQAEHPDTPYPFKMAIFTSAFLPHSFDNGVISWDLTEKNTLEPTYLPGRIDVSHGKKLDWKKDLHTSIEYDMINAVKDELDFPVDLLLRWRPSDIPEKIPVPSVHVRGLKDHYSFVDESVYELFDPEMARKMTHRGGHNFPRYNEELVHFAELIIETVVSLH.

Residues serine 93, aspartate 183, and histidine 243 each act as charge relay system in the active site.

Belongs to the AB hydrolase 3 family.

The protein operates within mycotoxin biosynthesis. Its function is as follows. Hydrolase; part of the gene cluster that mediates the biosynthesis of fusaric acid, a mycotoxin with low to moderate toxicity to animals and humans, but with high phytotoxic properties. L-aspartate is suggested as fusaric acid amino acid precursor that is activated and further processed to O-acetyl-L-homoserine by cluster enzymes aspartate kinase FUB3 and homoserine O-acetyltransferase FUB5, as well as enzymes of the primary metabolism. The polyketide synthase (PKS) FUB1 generates the triketide trans-2-hexenal which is presumptively released by the hydrolase FUB4 and linked to the NRPS-bound amino acid precursor by NAD(P)-dependent dehydrogenase FUB6. FUB1, FUB4, and the non-canonical NRPS Fub8 may form an enzyme complex. Further processing of the NRPS-bound intermediate might be carried out by FUB6 and the sulfhydrylase FUB7, enabling a spontaneous electrocyclization to close the carbon backbone of fusaric acid. Dihydrofusaric acid is likely to be released via reduction by the thioester reductase (TR) domain of FUB8 whereupon the final oxidation to fusaric acid may (also) be performed by the FMN-dependent dehydrogenase FUB9. In Fusarium oxysporum f. sp. lycopersici (strain 4287 / CBS 123668 / FGSC 9935 / NRRL 34936) (Fusarium vascular wilt of tomato), this protein is Hydrolase FUB4.